The following is a 240-amino-acid chain: Dihydromonapterin reductase (240 aa).

Catalysis depends on tyrosine 152, which acts as the Proton acceptor.

Belongs to the short-chain dehydrogenases/reductases (SDR) family. FolM subfamily.

It carries out the reaction (6S)-5,6,7,8-tetrahydrofolate + NADP(+) = 7,8-dihydrofolate + NADPH + H(+). The catalysed reaction is 7,8-dihydromonapterin + NADPH + H(+) = 5,6,7,8-tetrahydromonapterin + NADP(+). Catalyzes the reduction of dihydromonapterin to tetrahydromonapterin. Also has lower activity with dihydrofolate. This Escherichia coli O1:K1 / APEC protein is Dihydromonapterin reductase (folM).